A 163-amino-acid polypeptide reads, in one-letter code: CASP-like protein 1C3 (163 aa).

Over 1–6 (MAKIKK) the chain is Cytoplasmic. A helical transmembrane segment spans residues 7-27 (IFTNFLRLLALAATVVAIVFM). Residues 28–52 (VTSHDSAQVLNLTFTVKYSNTPVFK) lie on the Extracellular side of the membrane. N38 is a glycosylation site (N-linked (GlcNAc...) asparagine). The helical transmembrane segment at 53 to 73 (YFVIAEAIAGGYIVISILLSF) threads the bilayer. Over 74 to 79 (KSLFWR) the chain is Cytoplasmic. A helical membrane pass occupies residues 80-100 (LLVILDMVTAVLLTSSISAAL). Topologically, residues 101-128 (AIAQVGKKGNTHAGWLPVCEQVPDFCDQ) are extracellular. Residues 129 to 149 (VTIALIAGFAAAIIYFVLLLC) form a helical membrane-spanning segment. Residues 150–163 (SLYVVLSPIFVVTP) lie on the Cytoplasmic side of the membrane.

This sequence belongs to the Casparian strip membrane proteins (CASP) family. Homodimer and heterodimers.

It localises to the cell membrane. This chain is CASP-like protein 1C3, found in Populus trichocarpa (Western balsam poplar).